A 277-amino-acid chain; its full sequence is MARDLIGPALPPGFKAGGSAEDEERDSSPVAGPALPPNYKSSSSESSDSDEDSSSLSEEGNQESEEDDTGPPARKLRRNQDDDDDDDDEGFFGPALPPGFKKQDDSPPRPMIGPALPPGFLKSTQKSDEGRSDPGQVSSDFNSEKETDSSEEEDIVGPMPAKGPVNSSVTAEFEKRAQRMKEKLTKGDDDSSKPITRESWMTELPPEMKDFGLGPRTFKRRADGKSGDRSVWTDTPADRERKAKVRGLVCSCISVHVGSILKKNRRQNYSRVLFLSL.

A disordered region spans residues Met1–Glu240. Ala2 is subject to N-acetylalanine. The GPALPP motif 1 motif lies at Gly7–Pro12. Position 28 is a phosphoserine (Ser28). The GPALPP motif 2 motif lies at Gly32–Pro37. 2 stretches are compositionally biased toward acidic residues: residues Gly60–Thr69 and Asp81–Gly90. The GPALPP motif 3 motif lies at Gly93–Pro98. Ser106 carries the post-translational modification Phosphoserine. Over residues Pro108–Pro117 the composition is skewed to pro residues. A GPALPP motif 4 motif is present at residues Gly113 to Pro118. Ser138 and Ser143 each carry phosphoserine. Phosphothreonine is present on Thr147. 2 positions are modified to phosphoserine: Ser149 and Ser150. A compositionally biased stretch (basic and acidic residues) spans Glu172–Thr196.

The chain is GPALPP motifs-containing protein 1 (GPALPP1) from Bos taurus (Bovine).